Consider the following 250-residue polypeptide: DNA repair protein RecO (250 aa).

This sequence belongs to the RecO family.

Its function is as follows. Involved in DNA repair and RecF pathway recombination. In Rhodospirillum centenum (strain ATCC 51521 / SW), this protein is DNA repair protein RecO.